The primary structure comprises 335 residues: Casein kinase I (335 aa).

The 270-residue stretch at 9-278 (YRLGRKIGSG…LRRLFKDLFF (270 aa)) folds into the Protein kinase domain. ATP is bound by residues 15-23 (IGSGSFGDI) and Lys-38. Asp-128 serves as the catalytic Proton acceptor. Residues 304–335 (RSMVNQGAESGNQWRRDASGRDPLGRLPQLEP) form a disordered region. The segment covering 305–316 (SMVNQGAESGNQ) has biased composition (polar residues). The segment covering 317–327 (WRRDASGRDPL) has biased composition (basic and acidic residues).

Belongs to the protein kinase superfamily. CK1 Ser/Thr protein kinase family. Casein kinase I subfamily.

It catalyses the reaction L-seryl-[protein] + ATP = O-phospho-L-seryl-[protein] + ADP + H(+). The catalysed reaction is L-threonyl-[protein] + ATP = O-phospho-L-threonyl-[protein] + ADP + H(+). Casein kinases are operationally defined by their preferential utilization of acidic proteins such as caseins as substrates. It can phosphorylate a large number of proteins. The sequence is that of Casein kinase I from Eimeria tenella (Coccidian parasite).